Consider the following 267-residue polypeptide: Hydroxyethylthiazole kinase (267 aa).

Position 51 (methionine 51) interacts with substrate. ATP is bound by residues arginine 127 and serine 173. Alanine 200 is a binding site for substrate.

This sequence belongs to the Thz kinase family. The cofactor is Mg(2+).

The enzyme catalyses 5-(2-hydroxyethyl)-4-methylthiazole + ATP = 4-methyl-5-(2-phosphooxyethyl)-thiazole + ADP + H(+). The protein operates within cofactor biosynthesis; thiamine diphosphate biosynthesis; 4-methyl-5-(2-phosphoethyl)-thiazole from 5-(2-hydroxyethyl)-4-methylthiazole: step 1/1. Functionally, catalyzes the phosphorylation of the hydroxyl group of 4-methyl-5-beta-hydroxyethylthiazole (THZ). The polypeptide is Hydroxyethylthiazole kinase (Psychromonas ingrahamii (strain DSM 17664 / CCUG 51855 / 37)).